The chain runs to 726 residues: Peroxisomal fatty acid beta-oxidation multifunctional protein (726 aa).

The protein in the N-terminal section; belongs to the enoyl-CoA hydratase/isomerase family. It in the central section; belongs to the 3-hydroxyacyl-CoA dehydrogenase family. Monomer.

Its subcellular location is the peroxisome. The protein localises to the cytoplasm. The protein resides in the cytoskeleton. The catalysed reaction is a (3S)-3-hydroxyacyl-CoA = a (2E)-enoyl-CoA + H2O. The enzyme catalyses a 4-saturated-(3S)-3-hydroxyacyl-CoA = a (3E)-enoyl-CoA + H2O. It catalyses the reaction a (3Z)-enoyl-CoA = a 4-saturated (2E)-enoyl-CoA. It carries out the reaction a (3E)-enoyl-CoA = a 4-saturated (2E)-enoyl-CoA. The catalysed reaction is (3S)-3-hydroxybutanoyl-CoA = (3R)-3-hydroxybutanoyl-CoA. The enzyme catalyses a (3S)-3-hydroxyacyl-CoA + NAD(+) = a 3-oxoacyl-CoA + NADH + H(+). It functions in the pathway lipid metabolism; fatty acid beta-oxidation. Multifunctional enzyme involved in fatty acid beta-oxidation. Also binds to RNA and microtubules. Possible role in subcellular mRNA localization and RNA-cytoskeleton interactions. The sequence is that of Peroxisomal fatty acid beta-oxidation multifunctional protein (MFP) from Oryza sativa subsp. japonica (Rice).